A 243-amino-acid polypeptide reads, in one-letter code: Probable transcriptional regulatory protein Athe_0816 (243 aa).

It belongs to the TACO1 family.

Its subcellular location is the cytoplasm. This chain is Probable transcriptional regulatory protein Athe_0816, found in Caldicellulosiruptor bescii (strain ATCC BAA-1888 / DSM 6725 / KCTC 15123 / Z-1320) (Anaerocellum thermophilum).